A 98-amino-acid polypeptide reads, in one-letter code: uncharacterized protein (98 aa).

The segment covering 1-10 (MARRRKPLHR) has biased composition (basic residues). The segment at 1 to 21 (MARRRKPLHRQRPEPPSWALR) is disordered.

This is an uncharacterized protein from Mycobacterium bovis (strain ATCC BAA-935 / AF2122/97).